We begin with the raw amino-acid sequence, 277 residues long: MASEYTTSEYIKHHLTNATMCSTDNGIAFNKACSDAGFWAWHVDTLAWSIGLGLLFLIIFRSVASKATTGVPGKMQAFVELVVEFVDDNVKSTFHGKSALIAPLALTIFVWVLLMNLMDLVPVDLIPWVSGLIGQAAFGMDPHDVYNKAVPTTDLNLTFALASGVFILILFYSIKMKGIGGFAKELTMQPFGHPIFIPVNFILETVTLLARPLSLALRLFGNLYASELIFILIATIGYFQLPLHFMWAVFHILVLPLQAFIFMMLTIVYLSLACEDH.

5 helical membrane passes run 40–60, 98–118, 154–174, 219–239, and 245–265; these read AWHV…LIIF, SALI…MNLM, DLNL…FYSI, LFGN…IGYF, and FMWA…FMML.

This sequence belongs to the ATPase A chain family. As to quaternary structure, F-type ATPases have 2 components, CF(1) - the catalytic core - and CF(0) - the membrane proton channel. CF(1) has five subunits: alpha(3), beta(3), gamma(1), delta(1), epsilon(1). CF(0) has three main subunits: a(1), b(2) and c(9-12). The alpha and beta chains form an alternating ring which encloses part of the gamma chain. CF(1) is attached to CF(0) by a central stalk formed by the gamma and epsilon chains, while a peripheral stalk is formed by the delta and b chains.

Its subcellular location is the cell inner membrane. Its function is as follows. Key component of the proton channel; it plays a direct role in the translocation of protons across the membrane. The polypeptide is ATP synthase subunit a (Alteromonas mediterranea (strain DSM 17117 / CIP 110805 / LMG 28347 / Deep ecotype)).